We begin with the raw amino-acid sequence, 307 residues long: Transcription factor DIVARICATA (307 aa).

One can recognise an SANT domain in the interval 21 to 74; that stretch reads RSTTRWTAAENKAFENALAVFDENTPNRWERVAERVPGKTVGDVMRQYKELEDD. Residues 109–133 are disordered; it reads QSYGTGGRKSSSGRPSEQERKKGVP. Over residues 124–133 the composition is skewed to basic and acidic residues; the sequence is SEQERKKGVP. The 57-residue stretch at 126–182 folds into the HTH myb-type domain; it reads QERKKGVPWTEEEHKLFLMGLKKYGKGDWRNISRNFVITRTPTQVASHAQKYFIRQL. The segment at residues 154–178 is a DNA-binding region (H-T-H motif); it reads WRNISRNFVITRTPTQVASHAQKYF. Composition is skewed to polar residues over residues 196–206 and 222–231; these read ITTVNLSDNQT and MAQQQTSSTS. Positions 196 to 231 are disordered; sequence ITTVNLSDNQTPSPDNKKPPSSPDHSMAQQQTSSTS.

It localises to the nucleus. In terms of biological role, involved in the dorsovental asymmetry of flowers. Promotes ventral identity. The protein is Transcription factor DIVARICATA (DIVARICATA) of Antirrhinum majus (Garden snapdragon).